A 69-amino-acid polypeptide reads, in one-letter code: Large ribosomal subunit protein eL38 (69 aa).

The protein belongs to the eukaryotic ribosomal protein eL38 family.

This Solanum lycopersicum (Tomato) protein is Large ribosomal subunit protein eL38 (RPL38).